An 890-amino-acid polypeptide reads, in one-letter code: Alanine--tRNA ligase (890 aa).

Residues His-573, His-577, Cys-676, and His-680 each coordinate Zn(2+).

It belongs to the class-II aminoacyl-tRNA synthetase family. Zn(2+) serves as cofactor.

The protein localises to the cytoplasm. The catalysed reaction is tRNA(Ala) + L-alanine + ATP = L-alanyl-tRNA(Ala) + AMP + diphosphate. Functionally, catalyzes the attachment of alanine to tRNA(Ala) in a two-step reaction: alanine is first activated by ATP to form Ala-AMP and then transferred to the acceptor end of tRNA(Ala). Also edits incorrectly charged Ser-tRNA(Ala) and Gly-tRNA(Ala) via its editing domain. The protein is Alanine--tRNA ligase of Corynebacterium efficiens (strain DSM 44549 / YS-314 / AJ 12310 / JCM 11189 / NBRC 100395).